Reading from the N-terminus, the 400-residue chain is Phosphoglycerate kinase (400 aa).

Residues 22 to 24, R38, 61 to 64, R119, and R152 each bind substrate; these read DFN and HLGR. Residues K205, G296, E327, and 353 to 356 each bind ATP; that span reads GGDT.

It belongs to the phosphoglycerate kinase family. Monomer.

It localises to the cytoplasm. The catalysed reaction is (2R)-3-phosphoglycerate + ATP = (2R)-3-phospho-glyceroyl phosphate + ADP. The protein operates within carbohydrate degradation; glycolysis; pyruvate from D-glyceraldehyde 3-phosphate: step 2/5. The polypeptide is Phosphoglycerate kinase (Campylobacter jejuni subsp. doylei (strain ATCC BAA-1458 / RM4099 / 269.97)).